An 861-amino-acid chain; its full sequence is Integrator complex subunit 6-like (861 aa).

The VWFA domain occupies 3–227; sequence ILLFLIDTSA…QCLESLVQKV (225 aa). S617 carries the post-translational modification Phosphoserine.

This Mus musculus (Mouse) protein is Integrator complex subunit 6-like (Ints6l).